The following is a 115-amino-acid chain: Ribonuclease P protein component (115 aa).

The protein belongs to the RnpA family. As to quaternary structure, consists of a catalytic RNA component (M1 or rnpB) and a protein subunit.

The enzyme catalyses Endonucleolytic cleavage of RNA, removing 5'-extranucleotides from tRNA precursor.. Functionally, RNaseP catalyzes the removal of the 5'-leader sequence from pre-tRNA to produce the mature 5'-terminus. It can also cleave other RNA substrates such as 4.5S RNA. The protein component plays an auxiliary but essential role in vivo by binding to the 5'-leader sequence and broadening the substrate specificity of the ribozyme. The protein is Ribonuclease P protein component of Bacillus cereus (strain Q1).